A 929-amino-acid polypeptide reads, in one-letter code: Valine--tRNA ligase (929 aa).

A 'HIGH' region motif is present at residues 40 to 50; sequence PNVTGHLHMGH. The short motif at 522–526 is the 'KMSKS' region element; sequence KMSKS. Lys525 is an ATP binding site. Positions 855–926 form a coiled coil; sequence LAGLIDKEAE…LEQQHAEITD (72 aa).

Belongs to the class-I aminoacyl-tRNA synthetase family. ValS type 1 subfamily. As to quaternary structure, monomer.

It localises to the cytoplasm. The catalysed reaction is tRNA(Val) + L-valine + ATP = L-valyl-tRNA(Val) + AMP + diphosphate. Functionally, catalyzes the attachment of valine to tRNA(Val). As ValRS can inadvertently accommodate and process structurally similar amino acids such as threonine, to avoid such errors, it has a 'posttransfer' editing activity that hydrolyzes mischarged Thr-tRNA(Val) in a tRNA-dependent manner. This is Valine--tRNA ligase from Nitrosococcus oceani (strain ATCC 19707 / BCRC 17464 / JCM 30415 / NCIMB 11848 / C-107).